A 288-amino-acid polypeptide reads, in one-letter code: ATP synthase gamma chain (288 aa).

It belongs to the ATPase gamma chain family. F-type ATPases have 2 components, CF(1) - the catalytic core - and CF(0) - the membrane proton channel. CF(1) has five subunits: alpha(3), beta(3), gamma(1), delta(1), epsilon(1). CF(0) has three main subunits: a, b and c.

Its subcellular location is the cell inner membrane. In terms of biological role, produces ATP from ADP in the presence of a proton gradient across the membrane. The gamma chain is believed to be important in regulating ATPase activity and the flow of protons through the CF(0) complex. The protein is ATP synthase gamma chain of Rickettsia prowazekii (strain Madrid E).